A 422-amino-acid polypeptide reads, in one-letter code: Glutamyl-tRNA reductase (422 aa).

Residues 49–52, S107, 112–114, and Q118 contribute to the substrate site; these read TCNR and EPQ. C50 serves as the catalytic Nucleophile. Residue 187 to 192 participates in NADP(+) binding; it reads GAGETI.

The protein belongs to the glutamyl-tRNA reductase family. As to quaternary structure, homodimer.

The catalysed reaction is (S)-4-amino-5-oxopentanoate + tRNA(Glu) + NADP(+) = L-glutamyl-tRNA(Glu) + NADPH + H(+). It functions in the pathway porphyrin-containing compound metabolism; protoporphyrin-IX biosynthesis; 5-aminolevulinate from L-glutamyl-tRNA(Glu): step 1/2. In terms of biological role, catalyzes the NADPH-dependent reduction of glutamyl-tRNA(Glu) to glutamate 1-semialdehyde (GSA). In Stutzerimonas stutzeri (strain A1501) (Pseudomonas stutzeri), this protein is Glutamyl-tRNA reductase.